We begin with the raw amino-acid sequence, 496 residues long: Glycerol kinase (496 aa).

Thr-12 lines the ADP pocket. ATP is bound by residues Thr-12, Thr-13, and Ser-14. Thr-12 serves as a coordination point for sn-glycerol 3-phosphate. Arg-16 contributes to the ADP binding site. Residues Arg-82, Glu-83, and Tyr-134 each contribute to the sn-glycerol 3-phosphate site. Residues Arg-82, Glu-83, and Tyr-134 each contribute to the glycerol site. His-230 is subject to Phosphohistidine; by HPr. Asp-244 is a binding site for sn-glycerol 3-phosphate. 2 residues coordinate glycerol: Asp-244 and Gln-245. ADP contacts are provided by Thr-266 and Gly-309. ATP contacts are provided by Thr-266, Gly-309, Gln-313, and Gly-410. ADP is bound by residues Gly-410 and Asn-414.

The protein belongs to the FGGY kinase family. As to quaternary structure, homotetramer and homodimer (in equilibrium). In terms of processing, the phosphoenolpyruvate-dependent sugar phosphotransferase system (PTS), including enzyme I, and histidine-containing protein (HPr) are required for the phosphorylation, which leads to the activation of the enzyme.

It carries out the reaction glycerol + ATP = sn-glycerol 3-phosphate + ADP + H(+). Its pathway is polyol metabolism; glycerol degradation via glycerol kinase pathway; sn-glycerol 3-phosphate from glycerol: step 1/1. Its activity is regulated as follows. Activated by phosphorylation and inhibited by fructose 1,6-bisphosphate (FBP). In terms of biological role, key enzyme in the regulation of glycerol uptake and metabolism. Catalyzes the phosphorylation of glycerol to yield sn-glycerol 3-phosphate. The chain is Glycerol kinase from Bacillus cereus (strain ATCC 14579 / DSM 31 / CCUG 7414 / JCM 2152 / NBRC 15305 / NCIMB 9373 / NCTC 2599 / NRRL B-3711).